The following is a 95-amino-acid chain: Aspartyl/glutamyl-tRNA(Asn/Gln) amidotransferase subunit C (95 aa).

The protein belongs to the GatC family. Heterotrimer of A, B and C subunits.

It catalyses the reaction L-glutamyl-tRNA(Gln) + L-glutamine + ATP + H2O = L-glutaminyl-tRNA(Gln) + L-glutamate + ADP + phosphate + H(+). The enzyme catalyses L-aspartyl-tRNA(Asn) + L-glutamine + ATP + H2O = L-asparaginyl-tRNA(Asn) + L-glutamate + ADP + phosphate + 2 H(+). In terms of biological role, allows the formation of correctly charged Asn-tRNA(Asn) or Gln-tRNA(Gln) through the transamidation of misacylated Asp-tRNA(Asn) or Glu-tRNA(Gln) in organisms which lack either or both of asparaginyl-tRNA or glutaminyl-tRNA synthetases. The reaction takes place in the presence of glutamine and ATP through an activated phospho-Asp-tRNA(Asn) or phospho-Glu-tRNA(Gln). The chain is Aspartyl/glutamyl-tRNA(Asn/Gln) amidotransferase subunit C from Lysinibacillus sphaericus (strain C3-41).